We begin with the raw amino-acid sequence, 302 residues long: UDP-N-acetylenolpyruvoylglucosamine reductase (302 aa).

Positions 30 to 196 (IGGPADLFVE…IAATLEMKKG (167 aa)) constitute an FAD-binding PCMH-type domain. Residue R174 is part of the active site. Residue S225 is the Proton donor of the active site. Residue E295 is part of the active site.

This sequence belongs to the MurB family. FAD serves as cofactor.

Its subcellular location is the cytoplasm. The catalysed reaction is UDP-N-acetyl-alpha-D-muramate + NADP(+) = UDP-N-acetyl-3-O-(1-carboxyvinyl)-alpha-D-glucosamine + NADPH + H(+). Its pathway is cell wall biogenesis; peptidoglycan biosynthesis. In terms of biological role, cell wall formation. In Anoxybacillus flavithermus (strain DSM 21510 / WK1), this protein is UDP-N-acetylenolpyruvoylglucosamine reductase.